The primary structure comprises 271 residues: Putative carboxymethylenebutenolidase (271 aa).

Residues cysteine 147, aspartate 204, and histidine 236 contribute to the active site.

The protein belongs to the dienelactone hydrolase family.

It catalyses the reaction 2-(5-oxo-2,5-dihydrofuran-2-ylidene)acetate + H2O = 4-oxohex-2-enedioate + H(+). The protein is Putative carboxymethylenebutenolidase (ysgA) of Escherichia coli (strain K12).